The following is a 418-amino-acid chain: Cell division protein FtsA (418 aa).

This sequence belongs to the FtsA/MreB family. Self-interacts. Interacts with FtsZ.

Its subcellular location is the cell inner membrane. In terms of biological role, cell division protein that is involved in the assembly of the Z ring. May serve as a membrane anchor for the Z ring. The protein is Cell division protein FtsA of Buchnera aphidicola subsp. Schizaphis graminum (strain Sg).